The chain runs to 123 residues: Transmembrane protein 254 (123 aa).

The next 3 membrane-spanning stretches (helical) occupy residues 15 to 35 (LFWF…VFWP), 63 to 83 (NGYW…LVLC), and 95 to 115 (LLWF…LFAY).

It is found in the membrane. This chain is Transmembrane protein 254 (Tmem254), found in Rattus norvegicus (Rat).